Reading from the N-terminus, the 365-residue chain is MTTVNTDKRILIMAGGTGGHVFPALAVAKYLCQQGWQVRWLGTAERMEARLVPQHGFDIDFIDIKGVRGNGLLRKLAAPFKVIRSIMQAQAVIKEFKPDVVLGMGGFASGPGGVAARLSGLPLVLHEQNAIPGMTNKILARIASQVLCAFEDTFDNVEAEVVGNPIREELIALGDSNVDPVTDDALKVLVVGGSLGAKVFNDLMPSVTAAVSKTHSITVWHQVGKGNLQGVKAEYQHLGQDGSVNVAEFIDDMEAAYRWADVVLCRSGALTVSEVAAVGLPSLLVPYPHAVDDHQTKNAQVLVQAGGAFLLPQTILDANKLIGKLQILASDRNELAQMGLRAKSAAVLDATQKVASVCIRLAGKD.

Residues 17-19 (TGG), Asn-129, Arg-167, Ser-194, Ile-250, 269-274 (ALTVSE), and Gln-295 each bind UDP-N-acetyl-alpha-D-glucosamine.

This sequence belongs to the glycosyltransferase 28 family. MurG subfamily.

Its subcellular location is the cell inner membrane. It catalyses the reaction di-trans,octa-cis-undecaprenyl diphospho-N-acetyl-alpha-D-muramoyl-L-alanyl-D-glutamyl-meso-2,6-diaminopimeloyl-D-alanyl-D-alanine + UDP-N-acetyl-alpha-D-glucosamine = di-trans,octa-cis-undecaprenyl diphospho-[N-acetyl-alpha-D-glucosaminyl-(1-&gt;4)]-N-acetyl-alpha-D-muramoyl-L-alanyl-D-glutamyl-meso-2,6-diaminopimeloyl-D-alanyl-D-alanine + UDP + H(+). It participates in cell wall biogenesis; peptidoglycan biosynthesis. Its function is as follows. Cell wall formation. Catalyzes the transfer of a GlcNAc subunit on undecaprenyl-pyrophosphoryl-MurNAc-pentapeptide (lipid intermediate I) to form undecaprenyl-pyrophosphoryl-MurNAc-(pentapeptide)GlcNAc (lipid intermediate II). This is UDP-N-acetylglucosamine--N-acetylmuramyl-(pentapeptide) pyrophosphoryl-undecaprenol N-acetylglucosamine transferase from Shewanella sediminis (strain HAW-EB3).